The chain runs to 586 residues: Phosphomethylpyrimidine synthase (586 aa).

The disordered stretch occupies residues 1-59 (MKQSVSAEQIELKSSLPGSKKVYVDGPREGMKVPMREIEQSDTNGVPNPPIRVYDTSGP). Residues 22-39 (VYVDGPREGMKVPMREIE) are compositionally biased toward basic and acidic residues. Substrate is bound by residues Asn-193, Met-222, Tyr-251, His-287, 307-309 (SRG), 348-351 (DGLR), and Glu-387. His-391 provides a ligand contact to Zn(2+). Position 414 (Tyr-414) interacts with substrate. His-455 serves as a coordination point for Zn(2+). Residues Cys-535, Cys-538, and Cys-543 each contribute to the [4Fe-4S] cluster site.

The protein belongs to the ThiC family. [4Fe-4S] cluster is required as a cofactor.

It catalyses the reaction 5-amino-1-(5-phospho-beta-D-ribosyl)imidazole + S-adenosyl-L-methionine = 4-amino-2-methyl-5-(phosphooxymethyl)pyrimidine + CO + 5'-deoxyadenosine + formate + L-methionine + 3 H(+). The protein operates within cofactor biosynthesis; thiamine diphosphate biosynthesis. Its function is as follows. Catalyzes the synthesis of the hydroxymethylpyrimidine phosphate (HMP-P) moiety of thiamine from aminoimidazole ribotide (AIR) in a radical S-adenosyl-L-methionine (SAM)-dependent reaction. This Bacillus cereus (strain ATCC 10987 / NRS 248) protein is Phosphomethylpyrimidine synthase.